Reading from the N-terminus, the 354-residue chain is Uroporphyrinogen decarboxylase (354 aa).

Residues R27–R31, D77, Y154, T209, and H327 contribute to the substrate site.

This sequence belongs to the uroporphyrinogen decarboxylase family. As to quaternary structure, homodimer.

It is found in the cytoplasm. It carries out the reaction uroporphyrinogen III + 4 H(+) = coproporphyrinogen III + 4 CO2. It participates in porphyrin-containing compound metabolism; protoporphyrin-IX biosynthesis; coproporphyrinogen-III from 5-aminolevulinate: step 4/4. Catalyzes the decarboxylation of four acetate groups of uroporphyrinogen-III to yield coproporphyrinogen-III. The chain is Uroporphyrinogen decarboxylase from Cronobacter sakazakii (strain ATCC BAA-894) (Enterobacter sakazakii).